The chain runs to 276 residues: uncharacterized protein (276 aa).

A run of 10 helical transmembrane segments spans residues I5–V25, I31–L51, V63–V83, V89–L109, V119–I139, I142–L162, P168–P188, L200–Y220, A231–A251, and P253–V273. EamA domains lie at T12–E133 and V150–R274.

Belongs to the EamA transporter family.

It is found in the cell membrane. This is an uncharacterized protein from Archaeoglobus fulgidus (strain ATCC 49558 / DSM 4304 / JCM 9628 / NBRC 100126 / VC-16).